A 404-amino-acid chain; its full sequence is Snake venom metalloproteinase H5 (404 aa).

A signal peptide spans phenylalanine 1–serine 6. The propeptide occupies serine 7–lysine 177. Positions threonine 184–serine 379 constitute a Peptidase M12B domain. Cystine bridges form between cysteine 295–cysteine 374, cysteine 336–cysteine 358, and cysteine 338–cysteine 341. Histidine 320 is a Zn(2+) binding site. The active site involves glutamate 321. Residues histidine 324 and histidine 330 each contribute to the Zn(2+) site. A propeptide spanning residues serine 379–alanine 404 is cleaved from the precursor. The disordered stretch occupies residues valine 385 to alanine 404. The span at proline 394–alanine 404 shows a compositional bias: acidic residues.

In terms of assembly, monomer. Requires Zn(2+) as cofactor. As to expression, expressed by the venom gland.

The protein localises to the secreted. In terms of biological role, this probable venom zinc protease is not hemorrhagic when 3 ug are injected onto the back skin of guinea pig. In Deinagkistrodon acutus (Hundred-pace snake), this protein is Snake venom metalloproteinase H5.